Here is a 152-residue protein sequence, read N- to C-terminus: Lipoprotein signal peptidase (152 aa).

The next 2 helical transmembrane spans lie at 55 to 75 and 85 to 105; these read NKMWFFYIITVVFVVFIVFYM and LGISLGLILGGAIGNFIDRVF. Catalysis depends on residues aspartate 111 and aspartate 129. The helical transmembrane segment at 124–144 threads the bilayer; the sequence is VFNIADSALCIGVVLIIIQTL.

Belongs to the peptidase A8 family.

The protein localises to the cell membrane. The enzyme catalyses Release of signal peptides from bacterial membrane prolipoproteins. Hydrolyzes -Xaa-Yaa-Zaa-|-(S,diacylglyceryl)Cys-, in which Xaa is hydrophobic (preferably Leu), and Yaa (Ala or Ser) and Zaa (Gly or Ala) have small, neutral side chains.. It participates in protein modification; lipoprotein biosynthesis (signal peptide cleavage). Functionally, this protein specifically catalyzes the removal of signal peptides from prolipoproteins. The protein is Lipoprotein signal peptidase of Bacillus cereus (strain ZK / E33L).